The sequence spans 330 residues: Methionyl-tRNA formyltransferase (330 aa).

112 to 115 contacts (6S)-5,6,7,8-tetrahydrofolate; sequence SLLP.

It belongs to the Fmt family.

It carries out the reaction L-methionyl-tRNA(fMet) + (6R)-10-formyltetrahydrofolate = N-formyl-L-methionyl-tRNA(fMet) + (6S)-5,6,7,8-tetrahydrofolate + H(+). Its function is as follows. Attaches a formyl group to the free amino group of methionyl-tRNA(fMet). The formyl group appears to play a dual role in the initiator identity of N-formylmethionyl-tRNA by promoting its recognition by IF2 and preventing the misappropriation of this tRNA by the elongation apparatus. The protein is Methionyl-tRNA formyltransferase of Synechococcus sp. (strain RCC307).